Reading from the N-terminus, the 372-residue chain is Actin-related protein 2/3 complex subunit 1B (372 aa).

WD repeat units lie at residues 6 to 45 (FLVE…WVQV), 50 to 89 (EHNG…WKPT), 94 to 135 (RINR…WVCK), 140 to 179 (PIRS…VEER), 242 to 280 (SETL…GKLS), and 324 to 367 (LHKN…SALK).

It belongs to the WD repeat ARPC1 family. In terms of assembly, component of the Arp2/3 complex composed of ACTR2/ARP2, ACTR3/ARP3, ARPC1B/p41-ARC, ARPC2/p34-ARC, ARPC3/p21-ARC, ARPC4/p20-ARC and ARPC5/p16-ARC.

It is found in the cytoplasm. The protein resides in the cytoskeleton. It localises to the nucleus. Component of the Arp2/3 complex, a multiprotein complex that mediates actin polymerization upon stimulation by nucleation-promoting factor (NPF). The Arp2/3 complex mediates the formation of branched actin networks in the cytoplasm, providing the force for cell motility. In addition to its role in the cytoplasmic cytoskeleton, the Arp2/3 complex also promotes actin polymerization in the nucleus, thereby regulating gene transcription and repair of damaged DNA. The Arp2/3 complex promotes homologous recombination (HR) repair in response to DNA damage by promoting nuclear actin polymerization, leading to drive motility of double-strand breaks (DSBs). This is Actin-related protein 2/3 complex subunit 1B (ARPC1B) from Bos taurus (Bovine).